The following is a 63-amino-acid chain: Large ribosomal subunit protein bL28 (63 aa).

It belongs to the bacterial ribosomal protein bL28 family.

The protein is Large ribosomal subunit protein bL28 of Treponema denticola (strain ATCC 35405 / DSM 14222 / CIP 103919 / JCM 8153 / KCTC 15104).